A 287-amino-acid polypeptide reads, in one-letter code: uncharacterized protein (287 aa).

Disordered stretches follow at residues Gln-109 to Asp-175, Ile-203 to Val-223, and Lys-257 to Glu-287. Over residues Glu-110–Pro-136 the composition is skewed to low complexity. Over residues Arg-143–Lys-152 the composition is skewed to basic and acidic residues. Residues Glu-153 to Asn-162 show a composition bias toward basic residues. A compositionally biased stretch (basic and acidic residues) spans Ser-273–Glu-287.

This sequence belongs to the chlamydial CPn_0623/CT_504/TC_0791 family.

This is an uncharacterized protein from Chlamydia muridarum (strain MoPn / Nigg).